A 238-amino-acid polypeptide reads, in one-letter code: Uridylate kinase (238 aa).

13 to 16 contacts ATP; it reads KLSG. Gly-53 provides a ligand contact to UMP. Residues Gly-54 and Arg-58 each contribute to the ATP site. Residues Asp-73 and 134 to 141 each bind UMP; that span reads AGLPYFST. ATP is bound by residues Asn-162, Tyr-168, and Asp-171.

Belongs to the UMP kinase family. In terms of assembly, homohexamer.

The protein resides in the cytoplasm. The enzyme catalyses UMP + ATP = UDP + ADP. It functions in the pathway pyrimidine metabolism; CTP biosynthesis via de novo pathway; UDP from UMP (UMPK route): step 1/1. Inhibited by UTP. Functionally, catalyzes the reversible phosphorylation of UMP to UDP. The chain is Uridylate kinase from Clavibacter michiganensis subsp. michiganensis (strain NCPPB 382).